We begin with the raw amino-acid sequence, 375 residues long: Chaperone protein DnaJ (375 aa).

The region spanning 5–70 (DYYEVLGVSR…EKRARYDRFG (66 aa)) is the J domain. A CR-type zinc finger spans residues 136-214 (GDEVTLRIPK…CRGAGQVQDI (79 aa)). 8 residues coordinate Zn(2+): Cys149, Cys152, Cys166, Cys169, Cys188, Cys191, Cys202, and Cys205. CXXCXGXG motif repeat units lie at residues 149–156 (CPDCSGSG), 166–173 (CPQCGGSG), 188–195 (CSACRGEG), and 202–209 (CPRCRGAG).

It belongs to the DnaJ family. Homodimer. Requires Zn(2+) as cofactor.

The protein resides in the cytoplasm. Functionally, participates actively in the response to hyperosmotic and heat shock by preventing the aggregation of stress-denatured proteins and by disaggregating proteins, also in an autonomous, DnaK-independent fashion. Unfolded proteins bind initially to DnaJ; upon interaction with the DnaJ-bound protein, DnaK hydrolyzes its bound ATP, resulting in the formation of a stable complex. GrpE releases ADP from DnaK; ATP binding to DnaK triggers the release of the substrate protein, thus completing the reaction cycle. Several rounds of ATP-dependent interactions between DnaJ, DnaK and GrpE are required for fully efficient folding. Also involved, together with DnaK and GrpE, in the DNA replication of plasmids through activation of initiation proteins. This Oleidesulfovibrio alaskensis (strain ATCC BAA-1058 / DSM 17464 / G20) (Desulfovibrio alaskensis) protein is Chaperone protein DnaJ.